Consider the following 333-residue polypeptide: uncharacterized protein (333 aa).

This sequence belongs to the proline racemase family.

This is an uncharacterized protein from Vibrio parahaemolyticus serotype O3:K6 (strain RIMD 2210633).